Consider the following 255-residue polypeptide: MAAEIRLFTCLNDNFGYLIHDPATGATASVDAPEAAPIIAALAREGWTLTDILVTHHHGDHVGGVAELKQKYRCRVVAPHDRNGRIPEVDLRVAQGDVVKVGGLLARVLETPGHTLDHLAYVFDDDKAVFAGDTLFSIGCGRVFEGTYPMMWDSLLKLRVLPDDMRLYCGHEYTAANVKFALGVEPDNPALQARAAQVTALRAAGQPTIPTLLGEEKAANVFLRADEPSVAASVRLKGADPVAVFTELRERKNKS.

Residues His56, His58, Asp60, His61, His114, Asp133, and His171 each coordinate Zn(2+).

Belongs to the metallo-beta-lactamase superfamily. Glyoxalase II family. As to quaternary structure, monomer. Zn(2+) is required as a cofactor.

The catalysed reaction is an S-(2-hydroxyacyl)glutathione + H2O = a 2-hydroxy carboxylate + glutathione + H(+). It participates in secondary metabolite metabolism; methylglyoxal degradation; (R)-lactate from methylglyoxal: step 2/2. In terms of biological role, thiolesterase that catalyzes the hydrolysis of S-D-lactoyl-glutathione to form glutathione and D-lactic acid. This Rhodopseudomonas palustris (strain BisA53) protein is Hydroxyacylglutathione hydrolase.